A 314-amino-acid chain; its full sequence is MSKLVKTTVASSAIAIISYKLGDQIFNLIGNFFTDNLLAKIEIDSSLNPKLFFAIKTELEKFVDSSKLLKINDFGSQIRYELNVGFYKIKTRKHGWIFVNYVDNKLILYKLPKISFFPPQIKKQTNRLKKFIDSVHSISCRPDEMRMCYTSNNNNWSYPIIRRPCKFLDSNLTTEMRSVLKDVDVFMRNEDTYRELGANYRRGMLLYGESGCGKTGLISIISNKYGMDSYILNLNSKDMSDSVLISLASNVKARSILVIEEIDKQIETLNANGNKNVSIGGLLSALDGPQGLAHVLCYNDSQCDIFFQQITWKL.

This is an uncharacterized protein from Acanthamoeba polyphaga mimivirus (APMV).